The sequence spans 453 residues: tRNA modification GTPase MnmE (453 aa).

Positions 22, 79, and 119 each coordinate (6S)-5-formyl-5,6,7,8-tetrahydrofolate. Residues 215–376 (GMKVVIAGRP…LKLHLKSLMG (162 aa)) enclose the TrmE-type G domain. A K(+)-binding site is contributed by Asn-225. Residues 225–230 (NAGKSS), 244–250 (TEIAGTT), 269–272 (DTAG), and 334–337 (NKAD) contribute to the GTP site. Residue Ser-229 participates in Mg(2+) binding. The K(+) site is built by Thr-244, Ile-246, and Thr-249. Residue Thr-250 coordinates Mg(2+). Lys-453 contributes to the (6S)-5-formyl-5,6,7,8-tetrahydrofolate binding site.

It belongs to the TRAFAC class TrmE-Era-EngA-EngB-Septin-like GTPase superfamily. TrmE GTPase family. In terms of assembly, homodimer. Heterotetramer of two MnmE and two MnmG subunits. Requires K(+) as cofactor.

It is found in the cytoplasm. Functionally, exhibits a very high intrinsic GTPase hydrolysis rate. Involved in the addition of a carboxymethylaminomethyl (cmnm) group at the wobble position (U34) of certain tRNAs, forming tRNA-cmnm(5)s(2)U34. This Shewanella sp. (strain W3-18-1) protein is tRNA modification GTPase MnmE.